The following is a 215-amino-acid chain: Beta-crystallin A3-1 (215 aa).

The interval 1–30 (MEIPVDQTEREDITSEKMAQINPLPVHLGP) is N-terminal arm. 2 Beta/gamma crystallin 'Greek key' domains span residues 31–70 (WKIT…KVEC) and 71–117 (GAWI…RPIC). Residues 118–123 (SANHIE) are connecting peptide. Beta/gamma crystallin 'Greek key' domains lie at 124 to 165 (SKLV…KVQC) and 166 to 214 (GAWV…RRIQ).

The protein belongs to the beta/gamma-crystallin family. As to quaternary structure, homo/heterodimer, or complexes of higher-order. The structure of beta-crystallin oligomers seems to be stabilized through interactions between the N-terminal arms. In terms of processing, the N-terminus is blocked.

Functionally, crystallins are the dominant structural components of the vertebrate eye lens. The polypeptide is Beta-crystallin A3-1 (Aquarana catesbeiana (American bullfrog)).